A 484-amino-acid polypeptide reads, in one-letter code: MTATIEETQETGSAGVGRIARVIGPVVDVEFPVDSMPEIYNKLECELTLEGEAKILSLEVAQHIGDGMVRAISLQPTDGLVRGAQVTDTGGPITVPVGDATLGKVFNTLGEVLNLEEGETFEVKERWGIHRKAPAFDQLESKTQMFETGIKVIDLLTPYVQGGKIGLFGGAGVGKTVLIQEMIARVAKDHGGVSVFAGVGERTREGNDLIVEMEEAGVIGQTALVFGQMDEPPGTRLRVALSALTMAEYFRDVQGQDVLLFIDNIFRFTQAGSEVSTLLGRMPSAVGYQPNLADEMGTLQERITSTRGHSITSMQAIYVPADDYTDPAPATTFAHLDATTELSREIASLGIYPAVDPLTSTSRILDPQYIGQAHYDCAIRIKQILQRNKELQDIIAILGVDELSEEDKIIVSRARRIQRFLSQNTYVAKQFTGIEGSTVPVSETIEGFNKIADGEYDHVAEQAFFMCGGLDDVEQKWAEIQKSL.

ATP is bound at residue 169–176; that stretch reads GGAGVGKT.

Belongs to the ATPase alpha/beta chains family. In terms of assembly, F-type ATPases have 2 components, CF(1) - the catalytic core - and CF(0) - the membrane proton channel. CF(1) has five subunits: alpha(3), beta(3), gamma(1), delta(1), epsilon(1). CF(0) has three main subunits: a(1), b(2) and c(9-12). The alpha and beta chains form an alternating ring which encloses part of the gamma chain. CF(1) is attached to CF(0) by a central stalk formed by the gamma and epsilon chains, while a peripheral stalk is formed by the delta and b chains.

It localises to the cell membrane. The catalysed reaction is ATP + H2O + 4 H(+)(in) = ADP + phosphate + 5 H(+)(out). Produces ATP from ADP in the presence of a proton gradient across the membrane. The catalytic sites are hosted primarily by the beta subunits. The protein is ATP synthase subunit beta of Nocardioides sp. (strain ATCC BAA-499 / JS614).